The following is a 274-amino-acid chain: Large ribosomal subunit protein uL2cz (274 aa).

2 disordered regions span residues 1–25 (MAIH…VKSN) and 224–274 (NPVD…RRSK). The segment covering 7-25 (KTSTPSTRNGTVDSQVKSN) has biased composition (polar residues).

The protein belongs to the universal ribosomal protein uL2 family. As to quaternary structure, part of the 50S ribosomal subunit.

It is found in the plastid. Its subcellular location is the chloroplast. The chain is Large ribosomal subunit protein uL2cz (rpl2-A) from Coffea arabica (Arabian coffee).